Here is a 295-residue protein sequence, read N- to C-terminus: Proline-rich protein 32 (295 aa).

Disordered stretches follow at residues 10 to 48 (GHAP…GHPG) and 101 to 120 (ATGE…SGQD).

The chain is Proline-rich protein 32 (PRR32) from Bos taurus (Bovine).